The following is a 275-amino-acid chain: Large ribosomal subunit protein uL2 (275 aa).

2 disordered regions span residues 36–55 (GLTG…RRMG) and 224–263 (VVMN…RQNK).

This sequence belongs to the universal ribosomal protein uL2 family. In terms of assembly, part of the 50S ribosomal subunit. Forms a bridge to the 30S subunit in the 70S ribosome.

One of the primary rRNA binding proteins. Required for association of the 30S and 50S subunits to form the 70S ribosome, for tRNA binding and peptide bond formation. It has been suggested to have peptidyltransferase activity; this is somewhat controversial. Makes several contacts with the 16S rRNA in the 70S ribosome. The chain is Large ribosomal subunit protein uL2 from Rhodospirillum centenum (strain ATCC 51521 / SW).